We begin with the raw amino-acid sequence, 278 residues long: MALKTFNPTTPGQRQLVMVDRSALYKGKPVKRLTEGKNSNGGRNNTGRITVRFRGGGHKQAYRLVDFKRTKVDVPAKVERLEYDPNRTAFIALIKYEDGEQAYILAPQRLAVGDTVIAGAYVDVKPGNVMPLGNMPIGTIVHNVELKIGKGGQLARSAGTYAQIVGRDHDYVILRMNSGEQRLIHGRCIAAIGAVSNPDHMNISIGKAGRKRWLGRRPHNRGVVMNPIDHPHGGGEGRTSGGRHPVTPWGKPTKGKKTRSNKSTDKFILISRHKRKKK.

Residues 222-278 (GVVMNPIDHPHGGGEGRTSGGRHPVTPWGKPTKGKKTRSNKSTDKFILISRHKRKKK) form a disordered region.

It belongs to the universal ribosomal protein uL2 family. As to quaternary structure, part of the 50S ribosomal subunit. Forms a bridge to the 30S subunit in the 70S ribosome.

In terms of biological role, one of the primary rRNA binding proteins. Required for association of the 30S and 50S subunits to form the 70S ribosome, for tRNA binding and peptide bond formation. It has been suggested to have peptidyltransferase activity; this is somewhat controversial. Makes several contacts with the 16S rRNA in the 70S ribosome. The protein is Large ribosomal subunit protein uL2 of Rhodopseudomonas palustris (strain ATCC BAA-98 / CGA009).